A 316-amino-acid chain; its full sequence is Transaldolase (316 aa).

The Schiff-base intermediate with substrate role is filled by Lys-126.

Belongs to the transaldolase family. Type 1 subfamily. As to quaternary structure, homodimer.

It is found in the cytoplasm. The catalysed reaction is D-sedoheptulose 7-phosphate + D-glyceraldehyde 3-phosphate = D-erythrose 4-phosphate + beta-D-fructose 6-phosphate. The protein operates within carbohydrate degradation; pentose phosphate pathway; D-glyceraldehyde 3-phosphate and beta-D-fructose 6-phosphate from D-ribose 5-phosphate and D-xylulose 5-phosphate (non-oxidative stage): step 2/3. In terms of biological role, transaldolase is important for the balance of metabolites in the pentose-phosphate pathway. This Methylibium petroleiphilum (strain ATCC BAA-1232 / LMG 22953 / PM1) protein is Transaldolase.